The chain runs to 277 residues: Glycerol-3-phosphate acyltransferase (277 aa).

Transmembrane regions (helical) follow at residues 3-23 (FFIFLILVGYLMGSINSAIIV), 55-75 (IMVMVFDALKGILPVILAKLL), 79-99 (PVTVAFTALAAVVGHMYPVFF), 111-131 (IGALLAFHFVIGVMVAATWLL), and 155-175 (LILVGNLNIFPPLFMITILVL). The disordered stretch occupies residues 231–277 (KTEQAEAVKKPKAKKATTKAKKTTSKEETAKKPKSTKPKTKTVKEKE). Composition is skewed to basic residues over residues 240–253 (KPKAKKATTKAKKT) and 262–271 (KPKSTKPKTK).

The protein belongs to the PlsY family. As to quaternary structure, probably interacts with PlsX.

The protein resides in the cell inner membrane. It catalyses the reaction an acyl phosphate + sn-glycerol 3-phosphate = a 1-acyl-sn-glycero-3-phosphate + phosphate. It participates in lipid metabolism; phospholipid metabolism. Functionally, catalyzes the transfer of an acyl group from acyl-phosphate (acyl-PO(4)) to glycerol-3-phosphate (G3P) to form lysophosphatidic acid (LPA). This enzyme utilizes acyl-phosphate as fatty acyl donor, but not acyl-CoA or acyl-ACP. The sequence is that of Glycerol-3-phosphate acyltransferase from Legionella pneumophila (strain Lens).